The primary structure comprises 481 residues: ATP synthase subunit beta, chloroplastic (481 aa).

An ATP-binding site is contributed by Gly161–Thr168.

It belongs to the ATPase alpha/beta chains family. As to quaternary structure, F-type ATPases have 2 components, CF(1) - the catalytic core - and CF(0) - the membrane proton channel. CF(1) has five subunits: alpha(3), beta(3), gamma(1), delta(1), epsilon(1). CF(0) has four main subunits: a(1), b(1), b'(1) and c(9-12).

Its subcellular location is the plastid. The protein localises to the chloroplast thylakoid membrane. The catalysed reaction is ATP + H2O + 4 H(+)(in) = ADP + phosphate + 5 H(+)(out). Functionally, produces ATP from ADP in the presence of a proton gradient across the membrane. The catalytic sites are hosted primarily by the beta subunits. This is ATP synthase subunit beta, chloroplastic from Pylaiella littoralis (Seaweed).